The primary structure comprises 184 residues: GTP cyclohydrolase 1 (184 aa).

Zn(2+) is bound by residues Cys-75, His-78, and Cys-146.

This sequence belongs to the GTP cyclohydrolase I family. Homomer.

The catalysed reaction is GTP + H2O = 7,8-dihydroneopterin 3'-triphosphate + formate + H(+). It participates in cofactor biosynthesis; 7,8-dihydroneopterin triphosphate biosynthesis; 7,8-dihydroneopterin triphosphate from GTP: step 1/1. The sequence is that of GTP cyclohydrolase 1 from Streptococcus pneumoniae (strain ATCC 700669 / Spain 23F-1).